A 291-amino-acid polypeptide reads, in one-letter code: Small ribosomal subunit protein uS2 (291 aa).

Positions 255–291 (AGAATGEWSEAQGAQWETGTGAPAADWAAEPAKESSW) are disordered.

This sequence belongs to the universal ribosomal protein uS2 family. In terms of assembly, component of the small ribosomal subunit. Mature ribosomes consist of a small (40S) and a large (60S) subunit. The 40S subunit contains about 33 different proteins and 1 molecule of RNA (18S). The 60S subunit contains about 49 different proteins and 3 molecules of RNA (25S, 5.8S and 5S). Interacts with RPS21.

It is found in the cytoplasm. Required for the assembly and/or stability of the 40S ribosomal subunit. Required for the processing of the 20S rRNA-precursor to mature 18S rRNA in a late step of the maturation of 40S ribosomal subunits. The protein is Small ribosomal subunit protein uS2 of Podospora anserina (strain S / ATCC MYA-4624 / DSM 980 / FGSC 10383) (Pleurage anserina).